Consider the following 552-residue polypeptide: Hydroxylamine reductase (552 aa).

Residues Cys-3, Cys-6, Cys-18, and Cys-25 each coordinate [2Fe-2S] cluster. Residues His-250, Glu-274, Cys-318, Cys-406, Cys-434, Cys-459, Glu-493, and Lys-495 each contribute to the hybrid [4Fe-2O-2S] cluster site. Residue Cys-406 is modified to Cysteine persulfide.

It belongs to the HCP family. [2Fe-2S] cluster is required as a cofactor. The cofactor is hybrid [4Fe-2O-2S] cluster.

The protein localises to the cytoplasm. It catalyses the reaction A + NH4(+) + H2O = hydroxylamine + AH2 + H(+). Functionally, catalyzes the reduction of hydroxylamine to form NH(3) and H(2)O. The sequence is that of Hydroxylamine reductase from Shewanella woodyi (strain ATCC 51908 / MS32).